A 419-amino-acid polypeptide reads, in one-letter code: Homeobox-containing protein 1 (419 aa).

The region spanning 18 to 49 (DEPRFTIEQIDLLQRLRRTGMTKHEILHALET) is the HNF-p1 domain. Residues 56–152 (EHSDKFGRRS…GQRSYSFEAS (97 aa)) are disordered. Lysine 60 is covalently cross-linked (Glycyl lysine isopeptide (Lys-Gly) (interchain with G-Cter in SUMO2)). 2 stretches are compositionally biased toward low complexity: residues 64–73 (RSSYGGSSYG) and 81–93 (ASSSTATASTQTQ). The segment covering 94–132 (HSGMSPSPSNSYDTSPLPCTTNQNGRENNDRLSTSNGKM) has biased composition (polar residues). A Glycyl lysine isopeptide (Lys-Gly) (interchain with G-Cter in SUMO2) cross-link involves residue lysine 131. Residues 145 to 241 (RSYSFEASEE…PGATLSMRPA (97 aa)) enclose the POU-specific atypical domain. At serine 148 the chain carries Phosphoserine. Lysine 161 participates in a covalent cross-link: Glycyl lysine isopeptide (Lys-Gly) (interchain with G-Cter in SUMO2). Serine 170 is modified (phosphoserine). Glycyl lysine isopeptide (Lys-Gly) (interchain with G-Cter in SUMO2) cross-links involve residues lysine 174, lysine 217, and lysine 310. Positions 267–341 (RRGSRFTWRK…NRRKEIKRRA (75 aa)) form a DNA-binding region, homeobox. A disordered region spans residues 352 to 384 (IDVQSPGGHSNSDDVDGNDYSEQDDSTSHSDHQ). Residues 364 to 376 (DDVDGNDYSEQDD) are compositionally biased toward acidic residues. A Glycyl lysine isopeptide (Lys-Gly) (interchain with G-Cter in SUMO1); alternate cross-link involves residue lysine 412. A Glycyl lysine isopeptide (Lys-Gly) (interchain with G-Cter in SUMO2); alternate cross-link involves residue lysine 412.

In terms of assembly, associates with the telomerase holoenzyme complex. Interacts with DKC1, XRCC6 and COIL.

It is found in the nucleus. The protein resides in the cytoplasm. The protein localises to the chromosome. It localises to the telomere. Its subcellular location is the cajal body. It is found in the PML body. Binds directly to 5'-TTAGGG-3' repeats in telomeric DNA. Associates with the telomerase complex at sites of active telomere processing and positively regulates telomere elongation. Important for TERT binding to chromatin, indicating a role in recruitment of the telomerase complex to telomeres. Also plays a role in the alternative lengthening of telomeres (ALT) pathway in telomerase-negative cells where it promotes formation and/or maintenance of ALT-associated promyelocytic leukemia bodies (APBs). Enhances formation of telomere C-circles in ALT cells, suggesting a possible role in telomere recombination. Might also be involved in the DNA damage response at telomeres. This is Homeobox-containing protein 1 (Hmbox1) from Mus musculus (Mouse).